Reading from the N-terminus, the 198-residue chain is Recombination protein RecR (198 aa).

The C4-type zinc finger occupies 58-73 (CSTCGNFTDTDPCALC). One can recognise a Toprim domain in the interval 81–175 (STICVVEQPK…KVTRIAAGIP (95 aa)).

Belongs to the RecR family.

Functionally, may play a role in DNA repair. It seems to be involved in an RecBC-independent recombinational process of DNA repair. It may act with RecF and RecO. The sequence is that of Recombination protein RecR from Clostridium botulinum (strain Alaska E43 / Type E3).